The primary structure comprises 170 residues: MNLPLLATEGFGLNLNLFETNVLNWAVVVFGLYKFLPGFLGKMLQKRREGILLELKDAEDRLLKATQALEKAKTDLSLAEEKAGQIKADSLKRSESIRMESEKKAIEEMARIKQSAISDESSEASRAISQLRKEAVELAIKKALDSLPNRLDQTTQENLVTQSINNIEMN.

A helical transmembrane segment spans residues 22–41 (VLNWAVVVFGLYKFLPGFLG).

The protein belongs to the ATPase B chain family. F-type ATPases have 2 components, F(1) - the catalytic core - and F(0) - the membrane proton channel. F(1) has five subunits: alpha(3), beta(3), gamma(1), delta(1), epsilon(1). F(0) has four main subunits: a(1), b(1), b'(1) and c(10-14). The alpha and beta chains form an alternating ring which encloses part of the gamma chain. F(1) is attached to F(0) by a central stalk formed by the gamma and epsilon chains, while a peripheral stalk is formed by the delta, b and b' chains.

It localises to the cellular thylakoid membrane. F(1)F(0) ATP synthase produces ATP from ADP in the presence of a proton or sodium gradient. F-type ATPases consist of two structural domains, F(1) containing the extramembraneous catalytic core and F(0) containing the membrane proton channel, linked together by a central stalk and a peripheral stalk. During catalysis, ATP synthesis in the catalytic domain of F(1) is coupled via a rotary mechanism of the central stalk subunits to proton translocation. Its function is as follows. Component of the F(0) channel, it forms part of the peripheral stalk, linking F(1) to F(0). This chain is ATP synthase subunit b, found in Prochlorococcus marinus subsp. pastoris (strain CCMP1986 / NIES-2087 / MED4).